Consider the following 802-residue polypeptide: Leucine--tRNA ligase (802 aa).

The short motif at 40-51 is the 'HIGH' region element; the sequence is PYPSGAGLHVGH. A 'KMSKS' region motif is present at residues 576–580; it reads KMSKS. Position 579 (lysine 579) interacts with ATP.

It belongs to the class-I aminoacyl-tRNA synthetase family.

Its subcellular location is the cytoplasm. The enzyme catalyses tRNA(Leu) + L-leucine + ATP = L-leucyl-tRNA(Leu) + AMP + diphosphate. This is Leucine--tRNA ligase from Bacillus cereus (strain G9842).